A 101-amino-acid chain; its full sequence is Small ribosomal subunit protein uS14 (101 aa).

The protein belongs to the universal ribosomal protein uS14 family. As to quaternary structure, part of the 30S ribosomal subunit. Contacts proteins S3 and S10.

Functionally, binds 16S rRNA, required for the assembly of 30S particles and may also be responsible for determining the conformation of the 16S rRNA at the A site. The protein is Small ribosomal subunit protein uS14 of Methylorubrum populi (strain ATCC BAA-705 / NCIMB 13946 / BJ001) (Methylobacterium populi).